The primary structure comprises 377 residues: Dihydroorotate dehydrogenase (quinone) (377 aa).

FMN is bound by residues 68-72 and threonine 92; that span reads AGFDK. Substrate is bound at residue lysine 72. 117–121 provides a ligand contact to substrate; the sequence is NRMGF. The FMN site is built by asparagine 149 and asparagine 182. Asparagine 182 contacts substrate. The active-site Nucleophile is the serine 185. Asparagine 187 serves as a coordination point for substrate. 2 residues coordinate FMN: lysine 224 and threonine 252. 253–254 contacts substrate; it reads NT. Residues glycine 278, glycine 307, and 328 to 329 each bind FMN; that span reads YT.

The protein belongs to the dihydroorotate dehydrogenase family. Type 2 subfamily. Monomer. The cofactor is FMN.

The protein resides in the cell membrane. It carries out the reaction (S)-dihydroorotate + a quinone = orotate + a quinol. It participates in pyrimidine metabolism; UMP biosynthesis via de novo pathway; orotate from (S)-dihydroorotate (quinone route): step 1/1. Catalyzes the conversion of dihydroorotate to orotate with quinone as electron acceptor. This is Dihydroorotate dehydrogenase (quinone) from Thermobifida fusca (strain YX).